The following is a 293-amino-acid chain: uncharacterized protein (293 aa).

In terms of domain architecture, HTH lysR-type spans 1-58; that stretch reads MDLRRFITLKTVVEEGSFLRASQKLCCTQSTVTFHIQQLEQEFSVQLFEKIGRRMCLT. The H-T-H motif DNA-binding region spans 18 to 37; sequence FLRASQKLCCTQSTVTFHIQ.

Belongs to the LysR transcriptional regulatory family.

This is an uncharacterized protein from Escherichia coli (strain K12).